The sequence spans 641 residues: Phosphomethylpyrimidine synthase (641 aa).

The segment covering 1–13 has biased composition (polar residues); the sequence is MNIRSNPDTTRPA. Positions 1–21 are disordered; sequence MNIRSNPDTTRPAVTTGGLPS. Substrate is bound by residues Asn-221, Met-250, Tyr-279, His-315, 335–337, 376–379, and Glu-415; these read SRG and DGLR. A Zn(2+)-binding site is contributed by His-419. Tyr-442 provides a ligand contact to substrate. Residue His-483 participates in Zn(2+) binding. Positions 563, 566, and 571 each coordinate [4Fe-4S] cluster.

Belongs to the ThiC family. Homodimer. [4Fe-4S] cluster is required as a cofactor.

The enzyme catalyses 5-amino-1-(5-phospho-beta-D-ribosyl)imidazole + S-adenosyl-L-methionine = 4-amino-2-methyl-5-(phosphooxymethyl)pyrimidine + CO + 5'-deoxyadenosine + formate + L-methionine + 3 H(+). Its pathway is cofactor biosynthesis; thiamine diphosphate biosynthesis. Its function is as follows. Catalyzes the synthesis of the hydroxymethylpyrimidine phosphate (HMP-P) moiety of thiamine from aminoimidazole ribotide (AIR) in a radical S-adenosyl-L-methionine (SAM)-dependent reaction. The chain is Phosphomethylpyrimidine synthase from Rhodopseudomonas palustris (strain BisB5).